Consider the following 694-residue polypeptide: MQNSDSGSDSATSVALRTSTSAQAPVVQPVPASQQVQTVQHVYPAQVQYVEGDTVYTNGAIRTAYSYNAETQIYAPSSGSSYFDSQGGGAQVTTVVSSPTAIPSHSMVGITMDVSGSQIISSSGAYLIHGGLENSRHTPSHTSRTFPATLEMAIENLQKNEGITSHKSSLLNSHLQWLLDNYETAEGVSLPRSSLYNHYLRHCQDHKLDPVNAASFGKLIRSVFMGLRTRRLGTRGNSKYHYYGIRLKPDSPLNRIQEDAQYMAIRQQPIHQKQRYRPAQKIDGMGENPANSSQHASPEQSVAAQSQHHQQFIDTSHVFPDFPAPDLGSLLLPEGITMTDIKNLQLMYRRHCEATIDVVMNLQFQYIEKLWQAFWNSKPSSPDGSNPMSSEDEQEPIIPNEKLMVLCKYEPIMRWMRNCDHILYQALVEILIPDVLRPVPSTLTQAIRNFAKSLEGWLTNAMCDFPQQIVHAKVGVVSAFAQTLRRYTSLNHLAQAARAVLQNTSQINQMLSDLNRVDFANVQEQASWVCQCDEGMVQKLEQDFKLTLQQQSSLDQWANWLDNVVTQVLKPHEGSTSFPKAARQFLLKWSFYSSMVIRDLTLRSAASFGSFHLIRLLYDEYMFYLVEHRVAQATGETPIAVMGEFSDFASMSPVQMDKDDVSELGSDTEGDPHISGQPPVKRERVELNHSMQEM.

The segment at residues 174–249 is a DNA-binding region (RFX-type winged-helix); the sequence is HLQWLLDNYE…YHYYGIRLKP (76 aa). 2 disordered regions span residues 267 to 310 and 658 to 694; these read QQPI…QHHQ and KDDVSELGSDTEGDPHISGQPPVKRERVELNHSMQEM. Over residues 289 to 299 the composition is skewed to polar residues; sequence PANSSQHASPE. Positions 300–310 are enriched in low complexity; it reads QSVAAQSQHHQ.

Belongs to the RFX family. Homodimer. Heterodimer; heterodimerizes with other rfx proteins. In terms of tissue distribution, preferentially expressed in ciliated tissues, such as neural tube, gastrocoel roof plate, epidermal multiciliated cells, otic vesicles and kidneys.

It is found in the nucleus. Its subcellular location is the cytoplasm. In terms of biological role, transcription factor that acts as a key regulator of ciliogenesis. Specifically regulates expression of genes required for cilium assembly and function. Recognizes and binds the X-box, a regulatory motif with DNA sequence 5'-GTNRCC(0-3N)RGYAAC-3' present on promoters. Required for neural tube closure and neural ciliogenesis. The sequence is that of DNA-binding protein RFX2 (rfx2) from Xenopus laevis (African clawed frog).